Consider the following 233-residue polypeptide: Large ribosomal subunit protein uL1 (233 aa).

The protein belongs to the universal ribosomal protein uL1 family. As to quaternary structure, part of the 50S ribosomal subunit.

Functionally, binds directly to 23S rRNA. The L1 stalk is quite mobile in the ribosome, and is involved in E site tRNA release. In terms of biological role, protein L1 is also a translational repressor protein, it controls the translation of the L11 operon by binding to its mRNA. This Brucella canis (strain ATCC 23365 / NCTC 10854 / RM-666) protein is Large ribosomal subunit protein uL1.